The following is a 640-amino-acid chain: Biosynthetic arginine decarboxylase (640 aa).

The residue at position 105 (K105) is an N6-(pyridoxal phosphate)lysine. 290–300 (FDVGGGLAIDY) contacts substrate.

This sequence belongs to the Orn/Lys/Arg decarboxylase class-II family. SpeA subfamily. It depends on Mg(2+) as a cofactor. The cofactor is pyridoxal 5'-phosphate.

It catalyses the reaction L-arginine + H(+) = agmatine + CO2. In terms of biological role, catalyzes the biosynthesis of agmatine from arginine. This Vibrio vulnificus (strain CMCP6) protein is Biosynthetic arginine decarboxylase.